The chain runs to 299 residues: ATP phosphoribosyltransferase (299 aa).

It belongs to the ATP phosphoribosyltransferase family. Long subfamily. As to quaternary structure, equilibrium between an active dimeric form, an inactive hexameric form and higher aggregates. Interconversion between the various forms is largely reversible and is influenced by the natural substrates and inhibitors of the enzyme. Mg(2+) serves as cofactor.

Its subcellular location is the cytoplasm. The catalysed reaction is 1-(5-phospho-beta-D-ribosyl)-ATP + diphosphate = 5-phospho-alpha-D-ribose 1-diphosphate + ATP. Its pathway is amino-acid biosynthesis; L-histidine biosynthesis; L-histidine from 5-phospho-alpha-D-ribose 1-diphosphate: step 1/9. Feedback inhibited by histidine. Its function is as follows. Catalyzes the condensation of ATP and 5-phosphoribose 1-diphosphate to form N'-(5'-phosphoribosyl)-ATP (PR-ATP). Has a crucial role in the pathway because the rate of histidine biosynthesis seems to be controlled primarily by regulation of HisG enzymatic activity. This is ATP phosphoribosyltransferase from Salmonella choleraesuis (strain SC-B67).